A 305-amino-acid chain; its full sequence is Sulfate adenylyltransferase subunit 2 (305 aa).

This sequence belongs to the PAPS reductase family. CysD subfamily. In terms of assembly, heterodimer composed of CysD, the smaller subunit, and CysN.

It catalyses the reaction sulfate + ATP + H(+) = adenosine 5'-phosphosulfate + diphosphate. The protein operates within sulfur metabolism; hydrogen sulfide biosynthesis; sulfite from sulfate: step 1/3. Its function is as follows. With CysN forms the ATP sulfurylase (ATPS) that catalyzes the adenylation of sulfate producing adenosine 5'-phosphosulfate (APS) and diphosphate, the first enzymatic step in sulfur assimilation pathway. APS synthesis involves the formation of a high-energy phosphoric-sulfuric acid anhydride bond driven by GTP hydrolysis by CysN coupled to ATP hydrolysis by CysD. The polypeptide is Sulfate adenylyltransferase subunit 2 (Stutzerimonas stutzeri (strain A1501) (Pseudomonas stutzeri)).